The sequence spans 451 residues: Tubulin alpha chain (451 aa).

Residue glutamine 11 participates in GTP binding. Lysine 40 carries the post-translational modification N6-acetyllysine. Positions 71, 144, 145, 179, 206, and 228 each coordinate GTP. Glutamate 71 contributes to the Mg(2+) binding site. Glutamate 254 is an active-site residue.

This sequence belongs to the tubulin family. As to quaternary structure, dimer of alpha and beta chains. A typical microtubule is a hollow water-filled tube with an outer diameter of 25 nm and an inner diameter of 15 nM. Alpha-beta heterodimers associate head-to-tail to form protofilaments running lengthwise along the microtubule wall with the beta-tubulin subunit facing the microtubule plus end conferring a structural polarity. Microtubules usually have 13 protofilaments but different protofilament numbers can be found in some organisms and specialized cells. It depends on Mg(2+) as a cofactor. In terms of processing, undergoes a tyrosination/detyrosination cycle, the cyclic removal and re-addition of a C-terminal tyrosine residue by the enzymes tubulin tyrosine carboxypeptidase (TTCP) and tubulin tyrosine ligase (TTL), respectively. Post-translationally, acetylation of alpha chains at Lys-40 stabilizes microtubules and affects affinity and processivity of microtubule motors. This modification has a role in multiple cellular functions, ranging from cell motility, cell cycle progression or cell differentiation to intracellular trafficking and signaling.

Its subcellular location is the cytoplasm. The protein resides in the cytoskeleton. It catalyses the reaction GTP + H2O = GDP + phosphate + H(+). Functionally, tubulin is the major constituent of microtubules, a cylinder consisting of laterally associated linear protofilaments composed of alpha- and beta-tubulin heterodimers. Microtubules grow by the addition of GTP-tubulin dimers to the microtubule end, where a stabilizing cap forms. Below the cap, tubulin dimers are in GDP-bound state, owing to GTPase activity of alpha-tubulin. This is Tubulin alpha chain (TUBA) from Euglena gracilis.